The following is a 78-amino-acid chain: Mambalgin-1 (78 aa).

Residues 1-21 (MKTLLLTLLVVTIVCLDLGYS) form the signal peptide. 4 disulfide bridges follow: Cys-24-Cys-40, Cys-33-Cys-58, Cys-62-Cys-70, and Cys-71-Cys-76.

Belongs to the three-finger toxin family. Short-chain subfamily. Mambalgin sub-subfamily. Expressed by the venom gland.

It is found in the secreted. Its function is as follows. This three-finger toxin inhibits ASIC channels. It acts as a gating modifier toxin by decreasing the apparent proton sensitivity of activation and by slightly increasing the apparent proton sensitivity for inactivation. It binds more tightly to the closed state and to a much lesser extent the inactivated/desensitized state of ASIC1a isoform of ASIC1. It interacts directly with the outside surface of the thumb domain of chicken ASIC1a (ASIC1a), but does not insert into the acidic pocket as suggested for mambalgin-2. This binding leads to relocation of the thumb domain that could disrupt the acidic pocket of cASIC1a. It reversibly inhibits rat ASIC1a (IC(50)=3.4-55 nM), rat ASIC1a-ASIC2b (IC(50)=61 nM), rat ASIC1a-ASIC1b (IC(50)=72 nM), human ASIC1a (IC(50)=127-580 nM), chicken ASIC1a (IC(50)=123.6 nM), rat ASIC1b (IC(50)=22.2-203 nM), rat ASIC1a-ASIC2a (IC(50)=152-252 nM). In vivo, it shows a potent naloxone-resistant analgesic effect against acute and inflammatory pain upon central and peripheral injection. In addition, it also has an opioid-independent effect on both thermal and mechanical inflammatory pain after systemic administration and is effective against neuropathic pain. In Dendroaspis polylepis polylepis (Black mamba), this protein is Mambalgin-1.